The chain runs to 300 residues: 1D-myo-inositol 2-acetamido-2-deoxy-alpha-D-glucopyranoside deacetylase (300 aa).

The Zn(2+) site is built by histidine 13, aspartate 16, and histidine 147.

It belongs to the MshB deacetylase family. Zn(2+) is required as a cofactor.

The enzyme catalyses 1D-myo-inositol 2-acetamido-2-deoxy-alpha-D-glucopyranoside + H2O = 1D-myo-inositol 2-amino-2-deoxy-alpha-D-glucopyranoside + acetate. In terms of biological role, catalyzes the deacetylation of 1D-myo-inositol 2-acetamido-2-deoxy-alpha-D-glucopyranoside (GlcNAc-Ins) in the mycothiol biosynthesis pathway. The sequence is that of 1D-myo-inositol 2-acetamido-2-deoxy-alpha-D-glucopyranoside deacetylase from Mycobacterium avium (strain 104).